A 370-amino-acid polypeptide reads, in one-letter code: Sensor histidine kinase DesK (370 aa).

Residues 1–10 (MIKNHFTFQK) lie on the Extracellular side of the membrane. A helical transmembrane segment spans residues 11 to 31 (LNGITPYIWTIFFILPFYFIW). Over 32 to 36 (KSSST) the chain is Cytoplasmic. Residues 37-57 (FVIIVGIILTLLFFSVYRFAF) traverse the membrane as a helical segment. The Extracellular segment spans residues 58–70 (VSKGWTIYLWGFL). A helical transmembrane segment spans residues 71–91 (LIGISTASITLFSYIYFAFFI). At 92 to 103 (AYFIGNIKERVP) the chain is on the cytoplasmic side. The chain crosses the membrane as a helical span at residues 104 to 124 (FHILYYVHLISAAVAANFSLV). The Extracellular segment spans residues 125–128 (LKKE). The chain crosses the membrane as a helical span at residues 129 to 149 (FFLTQIPFVVITLISAILLPF). The Cytoplasmic segment spans residues 150–370 (SIKSRKERER…LTMAIPNNSK (221 aa)). The Histidine kinase domain maps to 186 to 369 (DLHDTLGQKL…KLTMAIPNNS (184 aa)). H188 bears the Phosphohistidine; by autocatalysis mark.

It localises to the cell membrane. The enzyme catalyses ATP + protein L-histidine = ADP + protein N-phospho-L-histidine.. Functionally, member of the two-component regulatory system DesR/DesK, responsible for cold induction of the des gene coding for the Delta5 acyl-lipid desaturase. Acts as a sensor of the membrane fluidity. Probably activates DesR by phosphorylation. The sequence is that of Sensor histidine kinase DesK (desK) from Bacillus subtilis (strain 168).